Consider the following 167-residue polypeptide: Large ribosomal subunit protein uL10 (167 aa).

Belongs to the universal ribosomal protein uL10 family. In terms of assembly, part of the ribosomal stalk of the 50S ribosomal subunit. The N-terminus interacts with L11 and the large rRNA to form the base of the stalk. The C-terminus forms an elongated spine to which L12 dimers bind in a sequential fashion forming a multimeric L10(L12)X complex.

In terms of biological role, forms part of the ribosomal stalk, playing a central role in the interaction of the ribosome with GTP-bound translation factors. This Psychromonas ingrahamii (strain DSM 17664 / CCUG 51855 / 37) protein is Large ribosomal subunit protein uL10.